The sequence spans 425 residues: Septin-7 (425 aa).

Residues 28-297 form the Septin-type G domain; the sequence is RGFEFTLMVV…ENYRSRKLAA (270 aa). The interval 38–45 is G1 motif; that stretch reads GESGLGKS. GTP-binding positions include 38-45, Thr71, Gly97, 176-184, Gly231, and Arg246; these read GESGLGKS and KADTLTPEE. The segment at 94–97 is G3 motif; that stretch reads DTPG. A G4 motif region spans residues 175–178; it reads AKAD. Positions 324–421 form a coiled coil; that stretch reads LAQMEEERRE…SRTLEKNKKK (98 aa).

It belongs to the TRAFAC class TrmE-Era-EngA-EngB-Septin-like GTPase superfamily. Septin GTPase family. As to quaternary structure, monomer, and homodimer. Nucleotide binding promotes oligomerization. Can form heterooligomers with other family members and form filaments.

The protein resides in the cytoplasm. It localises to the chromosome. Its subcellular location is the centromere. It is found in the kinetochore. The protein localises to the cytoskeleton. The protein resides in the spindle. It localises to the cleavage furrow. Its subcellular location is the midbody. It is found in the cilium axoneme. Functionally, filament-forming cytoskeletal GTPase. Required for normal organization of the actin cytoskeleton. Required for normal progress through mitosis. Involved in cytokinesis. Plays a role in ciliogenesis and collective cell movements including convergent extension during gastrulation. Controls cell elongation but not polarization during convergent extension. The protein is Septin-7 of Xenopus laevis (African clawed frog).